Consider the following 148-residue polypeptide: Puroindoline-B (148 aa).

The N-terminal stretch at 1–19 is a signal peptide; it reads MKTLFLLALLALVASTTFA. Positions 20–29 are excised as a propeptide; sequence QYSEVGGWYN.

In terms of processing, five disulfide bonds are present. Endosperm and aleurone layer of developing kernels. In the aleurone layer, mainly localized to starch granules and the surface of the plasma membrane, forming a uniform layer, also abundant in the intercellular space. In the endosperm, mainly localized to starch granules and the plasma membrane, but less abundant in the intercellular space. Not found in roots or coleoptiles.

Its subcellular location is the membrane. It localises to the secreted. The protein localises to the extracellular space. In terms of biological role, acts as a membranotoxin, probably through its antibacterial and antifungal activities, contributing to the defense mechanism of the plant against predators. Forms monovalent cation-selective ion channels in membranes. Has antibacterial activity against the Gram-positive bacteria S.aureus and C.michiganensis, and the Gram-negative bacteria E.coli, P.syringae pv phaseoli, A.tumefaciens and E.carotovora subsp carotovora. Acts synergistically with PINA against bacteria. Contributes to grain texture and hardness. This Triticum aestivum (Wheat) protein is Puroindoline-B (PINB).